The following is a 117-amino-acid chain: Aspartate 1-decarboxylase (117 aa).

Ser-25 (schiff-base intermediate with substrate; via pyruvic acid) is an active-site residue. Ser-25 is subject to Pyruvic acid (Ser). Thr-57 lines the substrate pocket. Tyr-58 serves as the catalytic Proton donor. A substrate-binding site is contributed by 72 to 74; the sequence is GAA.

It belongs to the PanD family. Heterooctamer of four alpha and four beta subunits. Pyruvate serves as cofactor. In terms of processing, is synthesized initially as an inactive proenzyme, which is activated by self-cleavage at a specific serine bond to produce a beta-subunit with a hydroxyl group at its C-terminus and an alpha-subunit with a pyruvoyl group at its N-terminus.

The protein resides in the cytoplasm. The enzyme catalyses L-aspartate + H(+) = beta-alanine + CO2. It functions in the pathway cofactor biosynthesis; (R)-pantothenate biosynthesis; beta-alanine from L-aspartate: step 1/1. In terms of biological role, catalyzes the pyruvoyl-dependent decarboxylation of aspartate to produce beta-alanine. The sequence is that of Aspartate 1-decarboxylase from Helicobacter pylori (strain J99 / ATCC 700824) (Campylobacter pylori J99).